The chain runs to 502 residues: MNDFPWLTIIVGLPIFAGTLIFFFPHRGNKIIRWYTICICILELLITAYVFCYHFQLDDPLIQLEQDYKWIHFFDFHWRLGIDGLSVGPILLTGFITTLATLAAWPVTRDSRLFHFLMLAMYSGQIGLFSSRDLLLFFIMWEFELIPVYLLLSMWGGKKRLYSATKFILYTAGGSIFLLMGVLGMGLYGSNEPTLNFETSANQPYPVALEILFYFGFLIGYAVKLPIIPLHTWLPDTHGEAHYSTCMLLAGILLKMGAYGLVRINMELLPHAHSIFSPWLIIVGAIQIIYAASTSLGQRNLKKRIAYSSVSHMGFIIIGICSITDTGLNGAILQMISHGFIGAALFFLAGTSYDRIRLVYLDEMGGIAIPMPKIFTMFSSFSMASLALPGMSGFAAELVVFFGLITSQKYLLMPKILITFVTAIGMILTPIYSLSMLRQMFYGYKQFKFKSLNSSFFDSGPRELFVSICIFLPVIGIGIYPDFVLSLSVDKVEAILSNYFYR.

The next 14 helical transmembrane spans lie at 4-24, 37-57, 87-107, 113-130, 134-154, 167-187, 208-228, 242-262, 272-292, 305-325, 330-350, 374-396, 416-436, and 464-484; these read FPWLTIIVGLPIFAGTLIFFF, ICICILELLITAYVFCYHFQL, VGPILLTGFITTLATLAAWPV, LFHFLMLAMYSGQIGLFS, LLLFFIMWEFELIPVYLLLSM, FILYTAGGSIFLLMGVLGMGL, ALEILFYFGFLIGYAVKLPII, HYSTCMLLAGILLKMGAYGLV, AHSIFSPWLIIVGAIQIIYAA, IAYSSVSHMGFIIIGICSITD, GAILQMISHGFIGAALFFLAG, IFTMFSSFSMASLALPGMSGFAA, ILITFVTAIGMILTPIYSLSM, and LFVSICIFLPVIGIGIYPDFV.

This sequence belongs to the complex I subunit 4 family.

It localises to the plastid. The protein resides in the chloroplast thylakoid membrane. It catalyses the reaction a plastoquinone + NADH + (n+1) H(+)(in) = a plastoquinol + NAD(+) + n H(+)(out). The enzyme catalyses a plastoquinone + NADPH + (n+1) H(+)(in) = a plastoquinol + NADP(+) + n H(+)(out). This Ranunculus macranthus (Large buttercup) protein is NAD(P)H-quinone oxidoreductase chain 4, chloroplastic.